The sequence spans 653 residues: Translation factor GUF1, mitochondrial (653 aa).

The tr-type G domain occupies 56 to 236 (ENYRNFSIVA…SIIKNIPAPN (181 aa)). GTP contacts are provided by residues 65 to 72 (AHVDHGKS), 129 to 133 (DTPGH), and 183 to 186 (NKID).

The protein belongs to the TRAFAC class translation factor GTPase superfamily. Classic translation factor GTPase family. LepA subfamily.

The protein localises to the mitochondrion inner membrane. It carries out the reaction GTP + H2O = GDP + phosphate + H(+). In terms of biological role, promotes mitochondrial protein synthesis. May act as a fidelity factor of the translation reaction, by catalyzing a one-codon backward translocation of tRNAs on improperly translocated ribosomes. Binds to mitochondrial ribosomes in a GTP-dependent manner. The polypeptide is Translation factor GUF1, mitochondrial (Candida tropicalis (strain ATCC MYA-3404 / T1) (Yeast)).